The following is a 212-amino-acid chain: 3-demethoxyubiquinol 3-hydroxylase (212 aa).

The segment at 21 to 42 (SRMSRPLPVPQESAVTEAAPEL) is disordered. Glu-61, Glu-91, His-94, Glu-143, Glu-175, and His-178 together coordinate Fe cation.

It belongs to the COQ7 family. The cofactor is Fe cation.

The protein localises to the cell membrane. The enzyme catalyses a 5-methoxy-2-methyl-3-(all-trans-polyprenyl)benzene-1,4-diol + AH2 + O2 = a 3-demethylubiquinol + A + H2O. It functions in the pathway cofactor biosynthesis; ubiquinone biosynthesis. In terms of biological role, catalyzes the hydroxylation of 2-nonaprenyl-3-methyl-6-methoxy-1,4-benzoquinol during ubiquinone biosynthesis. This chain is 3-demethoxyubiquinol 3-hydroxylase, found in Paraburkholderia xenovorans (strain LB400).